Here is a 418-residue protein sequence, read N- to C-terminus: UDP-N-acetylglucosamine 1-carboxyvinyltransferase 2 (418 aa).

22 to 23 (KN) serves as a coordination point for phosphoenolpyruvate. Arg92 lines the UDP-N-acetyl-alpha-D-glucosamine pocket. Cys116 functions as the Proton donor in the catalytic mechanism. A 2-(S-cysteinyl)pyruvic acid O-phosphothioketal modification is found at Cys116. UDP-N-acetyl-alpha-D-glucosamine contacts are provided by Asp305 and Ile327.

The protein belongs to the EPSP synthase family. MurA subfamily.

It localises to the cytoplasm. The catalysed reaction is phosphoenolpyruvate + UDP-N-acetyl-alpha-D-glucosamine = UDP-N-acetyl-3-O-(1-carboxyvinyl)-alpha-D-glucosamine + phosphate. It participates in cell wall biogenesis; peptidoglycan biosynthesis. In terms of biological role, cell wall formation. Adds enolpyruvyl to UDP-N-acetylglucosamine. This Mesorhizobium japonicum (strain LMG 29417 / CECT 9101 / MAFF 303099) (Mesorhizobium loti (strain MAFF 303099)) protein is UDP-N-acetylglucosamine 1-carboxyvinyltransferase 2.